Here is a 188-residue protein sequence, read N- to C-terminus: Ribosome-recycling factor (188 aa).

The protein belongs to the RRF family.

It is found in the cytoplasm. Responsible for the release of ribosomes from messenger RNA at the termination of protein biosynthesis. May increase the efficiency of translation by recycling ribosomes from one round of translation to another. This chain is Ribosome-recycling factor, found in Phenylobacterium zucineum (strain HLK1).